Reading from the N-terminus, the 73-residue chain is Small ribosomal subunit protein bS18c (73 aa).

It belongs to the bacterial ribosomal protein bS18 family. In terms of assembly, part of the 30S ribosomal subunit.

Its subcellular location is the plastid. The protein resides in the chloroplast. The chain is Small ribosomal subunit protein bS18c from Nephroselmis olivacea (Green alga).